The sequence spans 296 residues: Ribosomal RNA small subunit methyltransferase H (296 aa).

S-adenosyl-L-methionine-binding positions include 30–32 (GGH), Asp49, Phe76, Asp97, and Gln104.

This sequence belongs to the methyltransferase superfamily. RsmH family.

It localises to the cytoplasm. The catalysed reaction is cytidine(1402) in 16S rRNA + S-adenosyl-L-methionine = N(4)-methylcytidine(1402) in 16S rRNA + S-adenosyl-L-homocysteine + H(+). In terms of biological role, specifically methylates the N4 position of cytidine in position 1402 (C1402) of 16S rRNA. The protein is Ribosomal RNA small subunit methyltransferase H of Mesomycoplasma hyopneumoniae (strain 232) (Mycoplasma hyopneumoniae).